Consider the following 439-residue polypeptide: C4-dicarboxylate transport protein (439 aa).

9 consecutive transmembrane segments (helical) span residues 9–29 (HLYF…YYMP), 45–65 (MIKM…IAGM), 80–100 (LYFE…INVI), 150–170 (GEIL…SAMG), 186–206 (AFFG…FGAM), 221–241 (LGML…VVLG), 291–311 (VVGL…SIYL), 334–354 (ILGV…SGFV), and 357–377 (AATF…ILGI).

The protein belongs to the dicarboxylate/amino acid:cation symporter (DAACS) (TC 2.A.23) family.

The protein resides in the cell inner membrane. Functionally, responsible for the transport of dicarboxylates such as succinate, fumarate, and malate from the periplasm across the membrane. The sequence is that of C4-dicarboxylate transport protein from Citrifermentans bemidjiense (strain ATCC BAA-1014 / DSM 16622 / JCM 12645 / Bem) (Geobacter bemidjiensis).